Reading from the N-terminus, the 194-residue chain is Imidazoleglycerol-phosphate dehydratase (194 aa).

Belongs to the imidazoleglycerol-phosphate dehydratase family.

It is found in the cytoplasm. It catalyses the reaction D-erythro-1-(imidazol-4-yl)glycerol 3-phosphate = 3-(imidazol-4-yl)-2-oxopropyl phosphate + H2O. Its pathway is amino-acid biosynthesis; L-histidine biosynthesis; L-histidine from 5-phospho-alpha-D-ribose 1-diphosphate: step 6/9. The chain is Imidazoleglycerol-phosphate dehydratase from Methanothermobacter thermautotrophicus (strain ATCC 29096 / DSM 1053 / JCM 10044 / NBRC 100330 / Delta H) (Methanobacterium thermoautotrophicum).